The primary structure comprises 517 residues: uncharacterized protein (517 aa).

Disordered regions lie at residues 16 to 148 (KDES…TITK), 156 to 175 (VNKE…NTTT), and 216 to 351 (KLEK…EENE). Low complexity predominate over residues 48–75 (NNNNNNNNTTTTNNNTNNSNTSTSNNSK). The span at 84–112 (FDDDDDDGDEEDEEEEDDDDDDDDDDDET) shows a compositional bias: acidic residues. The span at 127-143 (QPQPQPQPQPQPQPPIK) shows a compositional bias: pro residues. The segment covering 236–252 (VSSTLSNSFDPNIIHNQ) has biased composition (polar residues). Positions 254-266 (SPPPPPISIPIPL) are enriched in pro residues. Composition is skewed to low complexity over residues 271-320 (NLNN…NSNI) and 327-347 (SSSM…SNNN). A coiled-coil region spans residues 340–452 (DNSSSNNNEE…HQNQQNSMNN (113 aa)).

Belongs to the ENTR1 family.

This is an uncharacterized protein from Dictyostelium discoideum (Social amoeba).